A 140-amino-acid polypeptide reads, in one-letter code: Protein archease (140 aa).

Aspartate 11, aspartate 139, and leucine 140 together coordinate Ca(2+).

The protein belongs to the archease family.

Activates the tRNA-splicing ligase complex by facilitating the enzymatic turnover of catalytic subunit RtcB. Acts by promoting the guanylylation of RtcB, a key intermediate step in tRNA ligation. Can also alter the NTP specificity of RtcB such that ATP, dGTP or ITP is used efficiently. The sequence is that of Protein archease from Methanopyrus kandleri (strain AV19 / DSM 6324 / JCM 9639 / NBRC 100938).